Reading from the N-terminus, the 1031-residue chain is Sodium/potassium-transporting ATPase subunit alpha (1031 aa).

The interval 1-33 (MADPGDLESRGKADSYSVAEKKSAPKKISKKNA) is disordered. The span at 7-23 (LESRGKADSYSVAEKKS) shows a compositional bias: basic and acidic residues. Positions 24 to 33 (APKKISKKNA) are enriched in basic residues. 4 consecutive transmembrane segments (helical) span residues 102 to 123 (MFGGFSMLLWIGAILCFFAFGI), 136 to 155 (LYLGIVLSVVVIITGCFSYY), 297 to 319 (FIHIVTGVAVFLGVSFLIISLAM), and 326 to 354 (AIIFLIGIIVANVPEGLLATVTVCLTLTA). Asp382 (4-aspartylphosphate intermediate) is an active-site residue. Lys512 is an ATP binding site. Residues Asp725 and Asp729 each contribute to the Mg(2+) site. Transmembrane regions (helical) follow at residues 795–818 (ISPFLMFILFGIPLPLGTITILCI), 857–882 (LISLAYGQIGMMQATAGFFTYFIILA), 924–944 (LTCQTAFFTTIVVVQWADLII), and 961–986 (FLNFGLFFETALAAFLQYTPGVNTGL).

Belongs to the cation transport ATPase (P-type) (TC 3.A.3) family. Type IIC subfamily. The sodium/potassium-transporting ATPase is composed of a catalytic alpha subunit, an auxiliary non-catalytic beta subunit and an additional regulatory subunit.

It is found in the cell membrane. The enzyme catalyses K(+)(out) + Na(+)(in) + ATP + H2O = K(+)(in) + Na(+)(out) + ADP + phosphate + H(+). This alpha subunit is resistant to ouabain. Its function is as follows. This is the catalytic component of the active enzyme, which catalyzes the hydrolysis of ATP coupled with the exchange of sodium and potassium ions across the plasma membrane. This action creates the electrochemical gradient of sodium and potassium ions, providing the energy for active transport of various nutrients. The polypeptide is Sodium/potassium-transporting ATPase subunit alpha (Hydra vulgaris (Hydra)).